We begin with the raw amino-acid sequence, 59 residues long: Large ribosomal subunit protein bL33 (59 aa).

This sequence belongs to the bacterial ribosomal protein bL33 family.

The protein is Large ribosomal subunit protein bL33 of Prosthecochloris aestuarii (strain DSM 271 / SK 413).